The chain runs to 61 residues: Beta-toxin Tce4 (61 aa).

Residues K1–C61 enclose the LCN-type CS-alpha/beta domain. Cystine bridges form between C11/C61, C15/C37, C23/C42, and C27/C44. The residue at position 61 (C61) is a Cysteine amide.

Belongs to the long (4 C-C) scorpion toxin superfamily. Sodium channel inhibitor family. Beta subfamily. As to expression, expressed by the venom gland.

It localises to the secreted. Functionally, beta toxins bind voltage-independently at site-4 of sodium channels (Nav) and shift the voltage of activation toward more negative potentials thereby affecting sodium channel activation and promoting spontaneous and repetitive firing. The protein is Beta-toxin Tce4 of Tityus cerroazul (Scorpion).